Reading from the N-terminus, the 417-residue chain is Serine hydroxymethyltransferase (417 aa).

(6S)-5,6,7,8-tetrahydrofolate contacts are provided by residues Leu121 and 125–127 (GHL). Lys229 is modified (N6-(pyridoxal phosphate)lysine). Residue 355–357 (SPF) participates in (6S)-5,6,7,8-tetrahydrofolate binding.

It belongs to the SHMT family. In terms of assembly, homodimer. Pyridoxal 5'-phosphate serves as cofactor.

The protein localises to the cytoplasm. It catalyses the reaction (6R)-5,10-methylene-5,6,7,8-tetrahydrofolate + glycine + H2O = (6S)-5,6,7,8-tetrahydrofolate + L-serine. It participates in one-carbon metabolism; tetrahydrofolate interconversion. It functions in the pathway amino-acid biosynthesis; glycine biosynthesis; glycine from L-serine: step 1/1. In terms of biological role, catalyzes the reversible interconversion of serine and glycine with tetrahydrofolate (THF) serving as the one-carbon carrier. This reaction serves as the major source of one-carbon groups required for the biosynthesis of purines, thymidylate, methionine, and other important biomolecules. Also exhibits THF-independent aldolase activity toward beta-hydroxyamino acids, producing glycine and aldehydes, via a retro-aldol mechanism. The chain is Serine hydroxymethyltransferase from Yersinia pestis bv. Antiqua (strain Antiqua).